We begin with the raw amino-acid sequence, 861 residues long: Leucine--tRNA ligase (861 aa).

Residues 42-52 carry the 'HIGH' region motif; it reads PYPSGKLHMGH. A 'KMSKS' region motif is present at residues 620–624; the sequence is KMSKS. Lys-623 is an ATP binding site.

This sequence belongs to the class-I aminoacyl-tRNA synthetase family.

The protein resides in the cytoplasm. It carries out the reaction tRNA(Leu) + L-leucine + ATP = L-leucyl-tRNA(Leu) + AMP + diphosphate. This chain is Leucine--tRNA ligase, found in Hahella chejuensis (strain KCTC 2396).